The sequence spans 839 residues: Dynein axonemal assembly factor 5 (839 aa).

HEAT repeat units follow at residues 10–48, 54–92, 94–137, 140–178, 181–219, 221–257, 259–297, 578–617, 675–713, 717–755, and 723–761; these read TSDV…DEKL, QHVF…HVPR, EEAL…VCGK, APYL…CIPE, HMQA…YSSG, SVDD…KLQD, YSFF…QWEK, GETL…KASE, LQVE…TCER, PDKL…CITD, and IYPE…ERTT.

Belongs to the DNAAF5 family. Interacts with DNAI2; probably involved in outer arm dynein assembly.

The protein localises to the cytoplasm. The protein resides in the dynein axonemal particle. Cytoplasmic protein involved in the delivery of the dynein machinery to the motile cilium. It is required for the assembly of the axonemal dynein inner and outer arms, two structures attached to the peripheral outer doublet A microtubule of the axoneme, that play a crucial role in cilium motility. The protein is Dynein axonemal assembly factor 5 of Xenopus laevis (African clawed frog).